Reading from the N-terminus, the 509-residue chain is Maturase K (509 aa).

It belongs to the intron maturase 2 family. MatK subfamily.

It localises to the plastid. Its subcellular location is the chloroplast. Functionally, usually encoded in the trnK tRNA gene intron. Probably assists in splicing its own and other chloroplast group II introns. The polypeptide is Maturase K (Nicotiana bigelovii (Bigelov's tobacco)).